Here is a 309-residue protein sequence, read N- to C-terminus: Tyrosine recombinase XerD (309 aa).

One can recognise a Core-binding (CB) domain in the interval 3–88 (MRASLAIENF…ALRQFFRFLY (86 aa)). Residues 109–302 (PLPKIMSVEN…LEERLHKLVS (194 aa)) enclose the Tyr recombinase domain. Catalysis depends on residues arginine 158, lysine 182, histidine 254, arginine 257, and histidine 280. The active-site O-(3'-phospho-DNA)-tyrosine intermediate is the tyrosine 289.

It belongs to the 'phage' integrase family. XerD subfamily. Forms a cyclic heterotetrameric complex composed of two molecules of XerC and two molecules of XerD.

The protein resides in the cytoplasm. Functionally, site-specific tyrosine recombinase, which acts by catalyzing the cutting and rejoining of the recombining DNA molecules. The XerC-XerD complex is essential to convert dimers of the bacterial chromosome into monomers to permit their segregation at cell division. It also contributes to the segregational stability of plasmids. The polypeptide is Tyrosine recombinase XerD (Brucella suis biovar 1 (strain 1330)).